A 129-amino-acid polypeptide reads, in one-letter code: Small ribosomal subunit protein uS11 (129 aa).

The protein belongs to the universal ribosomal protein uS11 family. Part of the 30S ribosomal subunit. Interacts with proteins S7 and S18. Binds to IF-3.

Located on the platform of the 30S subunit, it bridges several disparate RNA helices of the 16S rRNA. Forms part of the Shine-Dalgarno cleft in the 70S ribosome. This is Small ribosomal subunit protein uS11 from Macrococcus caseolyticus (strain JCSC5402) (Macrococcoides caseolyticum).